The following is a 294-amino-acid chain: ATP synthase gamma chain (294 aa).

This sequence belongs to the ATPase gamma chain family. F-type ATPases have 2 components, CF(1) - the catalytic core - and CF(0) - the membrane proton channel. CF(1) has five subunits: alpha(3), beta(3), gamma(1), delta(1), epsilon(1). CF(0) has three main subunits: a, b and c.

It is found in the cell inner membrane. In terms of biological role, produces ATP from ADP in the presence of a proton gradient across the membrane. The gamma chain is believed to be important in regulating ATPase activity and the flow of protons through the CF(0) complex. The protein is ATP synthase gamma chain of Paraburkholderia phytofirmans (strain DSM 17436 / LMG 22146 / PsJN) (Burkholderia phytofirmans).